Consider the following 255-residue polypeptide: Hydroxyacylglutathione hydrolase (255 aa).

7 residues coordinate Zn(2+): histidine 59, histidine 61, aspartate 63, histidine 64, histidine 118, aspartate 144, and histidine 182.

It belongs to the metallo-beta-lactamase superfamily. Glyoxalase II family. In terms of assembly, monomer. The cofactor is Zn(2+).

The catalysed reaction is an S-(2-hydroxyacyl)glutathione + H2O = a 2-hydroxy carboxylate + glutathione + H(+). It participates in secondary metabolite metabolism; methylglyoxal degradation; (R)-lactate from methylglyoxal: step 2/2. Functionally, thiolesterase that catalyzes the hydrolysis of S-D-lactoyl-glutathione to form glutathione and D-lactic acid. This Synechococcus sp. (strain WH7803) protein is Hydroxyacylglutathione hydrolase.